An 819-amino-acid chain; its full sequence is Protein EFR3 homolog A (819 aa).

The disordered stretch occupies residues 210–230 (DTDSRTGPPASPTTGDKEENP).

It belongs to the EFR3 family. As to quaternary structure, component of a phosphatidylinositol 4-kinase (PI4K) complex. Post-translationally, palmitoylated at its N-terminus, anchoring the protein to the plasma membrane.

It is found in the cell membrane. Functionally, component of a complex required to localize phosphatidylinositol 4-kinase (PI4K) to the plasma membrane. The complex acts as a regulator of phosphatidylinositol 4-phosphate (PtdIns(4)P) synthesis. In the complex, efr3a probably acts as the membrane-anchoring component. The polypeptide is Protein EFR3 homolog A (efr3a) (Xenopus laevis (African clawed frog)).